A 190-amino-acid chain; its full sequence is ATP synthase subunit delta (190 aa).

It belongs to the ATPase delta chain family. In terms of assembly, F-type ATPases have 2 components, F(1) - the catalytic core - and F(0) - the membrane proton channel. F(1) has five subunits: alpha(3), beta(3), gamma(1), delta(1), epsilon(1). F(0) has three main subunits: a(1), b(2) and c(10-14). The alpha and beta chains form an alternating ring which encloses part of the gamma chain. F(1) is attached to F(0) by a central stalk formed by the gamma and epsilon chains, while a peripheral stalk is formed by the delta and b chains.

It localises to the cell inner membrane. Its function is as follows. F(1)F(0) ATP synthase produces ATP from ADP in the presence of a proton or sodium gradient. F-type ATPases consist of two structural domains, F(1) containing the extramembraneous catalytic core and F(0) containing the membrane proton channel, linked together by a central stalk and a peripheral stalk. During catalysis, ATP synthesis in the catalytic domain of F(1) is coupled via a rotary mechanism of the central stalk subunits to proton translocation. In terms of biological role, this protein is part of the stalk that links CF(0) to CF(1). It either transmits conformational changes from CF(0) to CF(1) or is implicated in proton conduction. This chain is ATP synthase subunit delta, found in Methylobacterium nodulans (strain LMG 21967 / CNCM I-2342 / ORS 2060).